The sequence spans 297 residues: Phosphatidylglycerol--prolipoprotein diacylglyceryl transferase (297 aa).

Helical transmembrane passes span 20–40, 58–78, 104–124, and 133–153; these read FLTI…GLFI, ILPS…VIFE, IAIW…FLCI, and IHLK…QSIG. R154 contacts a 1,2-diacyl-sn-glycero-3-phospho-(1'-sn-glycerol). Transmembrane regions (helical) follow at residues 194 to 214, 225 to 245, and 266 to 286; these read TFIY…TIFY, GFIS…IEGL, and AQFI…FLRL.

It belongs to the Lgt family.

The protein resides in the cell inner membrane. The enzyme catalyses L-cysteinyl-[prolipoprotein] + a 1,2-diacyl-sn-glycero-3-phospho-(1'-sn-glycerol) = an S-1,2-diacyl-sn-glyceryl-L-cysteinyl-[prolipoprotein] + sn-glycerol 1-phosphate + H(+). It functions in the pathway protein modification; lipoprotein biosynthesis (diacylglyceryl transfer). In terms of biological role, catalyzes the transfer of the diacylglyceryl group from phosphatidylglycerol to the sulfhydryl group of the N-terminal cysteine of a prolipoprotein, the first step in the formation of mature lipoproteins. This is Phosphatidylglycerol--prolipoprotein diacylglyceryl transferase from Prochlorococcus marinus subsp. pastoris (strain CCMP1986 / NIES-2087 / MED4).